The following is a 283-amino-acid chain: Small aggregate formation protein (283 aa).

The protein localises to the cytoplasm. In terms of biological role, knockout of the gene for this protein causes small aggregate formation. May regulate the secretion or processing of a secreted factor that regulates aggregate size. The sequence is that of Small aggregate formation protein (smlA) from Dictyostelium discoideum (Social amoeba).